Reading from the N-terminus, the 134-residue chain is Large ribosomal subunit protein mL41 (134 aa).

Residues 1 to 13 (MGFLTAVTQGLVR) constitute a mitochondrion transit peptide.

It belongs to the mitochondrion-specific ribosomal protein mL41 family. As to quaternary structure, component of the mitochondrial ribosome large subunit (39S) which comprises a 16S rRNA and about 50 distinct proteins. Interacts with BCL2. Was also identified in the 28S mitochondrial ribosome.

It is found in the mitochondrion. Functionally, component of the mitochondrial ribosome large subunit. Also involved in apoptosis and cell cycle. Enhances p53/TP53 stability, thereby contributing to p53/TP53-induced apoptosis in response to growth-inhibitory condition. Enhances p53/TP53 translocation to the mitochondria. Has the ability to arrest the cell cycle at the G1 phase, possibly by stabilizing the CDKN1A and CDKN1B (p27Kip1) proteins. In Rattus norvegicus (Rat), this protein is Large ribosomal subunit protein mL41 (Mrpl41).